The primary structure comprises 236 residues: Purine nucleoside phosphorylase DeoD-type 1 (236 aa).

Residue His-5 coordinates a purine D-ribonucleoside. Phosphate-binding positions include Gly-21, Arg-25, Arg-44, and Arg-88–Ser-91. A purine D-ribonucleoside is bound by residues Glu-180–Glu-182 and Thr-204–Asp-205. Asp-205 functions as the Proton donor in the catalytic mechanism.

The protein belongs to the PNP/UDP phosphorylase family. Homohexamer; trimer of homodimers.

It carries out the reaction a purine D-ribonucleoside + phosphate = a purine nucleobase + alpha-D-ribose 1-phosphate. It catalyses the reaction a purine 2'-deoxy-D-ribonucleoside + phosphate = a purine nucleobase + 2-deoxy-alpha-D-ribose 1-phosphate. In terms of biological role, catalyzes the reversible phosphorolytic breakdown of the N-glycosidic bond in the beta-(deoxy)ribonucleoside molecules, with the formation of the corresponding free purine bases and pentose-1-phosphate. This chain is Purine nucleoside phosphorylase DeoD-type 1, found in Shewanella oneidensis (strain ATCC 700550 / JCM 31522 / CIP 106686 / LMG 19005 / NCIMB 14063 / MR-1).